Consider the following 497-residue polypeptide: ADP-dependent glucokinase (497 aa).

Residues 1–22 (MALWRGSAYAGFLALAVGCVFL) form the signal peptide. The 446-residue stretch at 52–497 (SPEGRLAAAW…LFYSEVHPHL (446 aa)) folds into the ADPK domain. Mg(2+) contacts are provided by glutamate 297, glutamate 328, and aspartate 481. Residue aspartate 481 is the Proton acceptor of the active site.

It belongs to the ADP-dependent glucokinase family. In terms of assembly, monomer. Requires Mg(2+) as cofactor.

It localises to the secreted. The enzyme catalyses D-glucose + ADP = D-glucose 6-phosphate + AMP + H(+). The protein operates within carbohydrate degradation; glycolysis. Functionally, catalyzes the phosphorylation of D-glucose to D-glucose 6-phosphate using ADP as the phosphate donor. GDP and CDP can replace ADP, but with reduced efficiency. The protein is ADP-dependent glucokinase (ADPGK) of Bos taurus (Bovine).